The following is a 361-amino-acid chain: MTAPRKPAAFRIEPEAAPTQETPKARQAELSRKPRGLKTDVALVIPAEVDVFDEPDIVAAEPPPAAAPRKRSLFGSIFFGAIGVLVSLAVGLWTDQLIRDLFARAEWLGWLAAGMAAIAVLALVVILIREFLAIARLAEVEKLQKRALDAIARDDPKAARSVVDELSAFVAAKPETAAGRRALAELRGEIIDGGNLVRLAEAEILGPLDARAKVMILEAAKRVSLVTAVSPRALVDVAYVVFEAGRLIRRLSELYGGRPGTLGFFRLARSVLAHLAVTGSIAVGDSFVQQIVGHGLAARLSAKLGEGVVNGMMTARIGIAAMETARPLPFSAAKRPGLGDFLSALTSFAAKKDTETTGSGK.

The disordered stretch occupies residues 1–33; that stretch reads MTAPRKPAAFRIEPEAAPTQETPKARQAELSRK. Basic and acidic residues predominate over residues 23 to 32; the sequence is PKARQAELSR. A run of 2 helical transmembrane segments spans residues 73–93 and 108–128; these read LFGSIFFGAIGVLVSLAVGLW and LGWLAAGMAAIAVLALVVILI.

It belongs to the UPF0283 family.

It localises to the cell inner membrane. This chain is UPF0283 membrane protein mlr0776, found in Mesorhizobium japonicum (strain LMG 29417 / CECT 9101 / MAFF 303099) (Mesorhizobium loti (strain MAFF 303099)).